Here is a 955-residue protein sequence, read N- to C-terminus: Glycine dehydrogenase (decarboxylating) (955 aa).

An N6-(pyridoxal phosphate)lysine modification is found at K702.

Belongs to the GcvP family. The glycine cleavage system is composed of four proteins: P, T, L and H. Pyridoxal 5'-phosphate serves as cofactor.

The enzyme catalyses N(6)-[(R)-lipoyl]-L-lysyl-[glycine-cleavage complex H protein] + glycine + H(+) = N(6)-[(R)-S(8)-aminomethyldihydrolipoyl]-L-lysyl-[glycine-cleavage complex H protein] + CO2. The glycine cleavage system catalyzes the degradation of glycine. The P protein binds the alpha-amino group of glycine through its pyridoxal phosphate cofactor; CO(2) is released and the remaining methylamine moiety is then transferred to the lipoamide cofactor of the H protein. This chain is Glycine dehydrogenase (decarboxylating), found in Stenotrophomonas maltophilia (strain R551-3).